The primary structure comprises 329 residues: Porphobilinogen deaminase (329 aa).

Cysteine 253 is modified (S-(dipyrrolylmethanemethyl)cysteine).

The protein belongs to the HMBS family. Monomer. Requires dipyrromethane as cofactor.

The catalysed reaction is 4 porphobilinogen + H2O = hydroxymethylbilane + 4 NH4(+). Tetrapolymerization of the monopyrrole PBG into the hydroxymethylbilane pre-uroporphyrinogen in several discrete steps. The protein is Porphobilinogen deaminase of Leifsonia xyli subsp. xyli (strain CTCB07).